Consider the following 474-residue polypeptide: Gasdermin-C (474 aa).

A triggers pyroptosis region spans residues Met-1–Ala-237.

This sequence belongs to the gasdermin family. In terms of assembly, homooligomer; homooligomeric ring-shaped pore complex containing 27-28 subunits when inserted in the membrane. Post-translationally, cleavage by CASP8 relieves autoinhibition by releasing the N-terminal moiety (Gasdermin-C, N-terminal) that initiates pyroptosis. Palmitoylated.

It is found in the cytoplasm. Its subcellular location is the cytosol. The protein resides in the cell membrane. Its activity is regulated as follows. The full-length protein before cleavage is inactive: intramolecular interactions between N- and C-terminal domains mediate autoinhibition in the absence of activation signal. The intrinsic pyroptosis-inducing activity is carried by the released N-terminal moiety (Gasdermin-C, N-terminal) following cleavage by caspase CASP8. This form constitutes the precursor of the pore-forming protein: upon cleavage, the released N-terminal moiety (Gasdermin-C, N-terminal) binds to membranes and forms pores, triggering pyroptosis. Functionally, pore-forming protein that causes membrane permeabilization and pyroptosis. Produced by the cleavage of gasdermin-C by caspase CASP8 in response to death signals. After cleavage, moves to the plasma membrane where it strongly binds to membrane inner leaflet lipids. Homooligomerizes within the membrane and forms pores of 10-15 nanometers (nm) of inner diameter, triggering pyroptosis. This chain is Gasdermin-C, found in Rattus norvegicus (Rat).